We begin with the raw amino-acid sequence, 365 residues long: Phospho-N-acetylmuramoyl-pentapeptide-transferase (365 aa).

A run of 10 helical transmembrane segments spans residues tyrosine 22–glycine 42, threonine 74–leucine 94, threonine 95–phenylalanine 115, lysine 134–serine 154, serine 168–glycine 188, glycine 201–glutamate 221, leucine 240–phenylalanine 260, valine 267–methionine 287, leucine 292–valine 312, and lysine 342–isoleucine 362.

It belongs to the glycosyltransferase 4 family. MraY subfamily. It depends on Mg(2+) as a cofactor.

The protein localises to the cell inner membrane. It carries out the reaction UDP-N-acetyl-alpha-D-muramoyl-L-alanyl-gamma-D-glutamyl-meso-2,6-diaminopimeloyl-D-alanyl-D-alanine + di-trans,octa-cis-undecaprenyl phosphate = di-trans,octa-cis-undecaprenyl diphospho-N-acetyl-alpha-D-muramoyl-L-alanyl-D-glutamyl-meso-2,6-diaminopimeloyl-D-alanyl-D-alanine + UMP. It functions in the pathway cell wall biogenesis; peptidoglycan biosynthesis. In terms of biological role, catalyzes the initial step of the lipid cycle reactions in the biosynthesis of the cell wall peptidoglycan: transfers peptidoglycan precursor phospho-MurNAc-pentapeptide from UDP-MurNAc-pentapeptide onto the lipid carrier undecaprenyl phosphate, yielding undecaprenyl-pyrophosphoryl-MurNAc-pentapeptide, known as lipid I. The chain is Phospho-N-acetylmuramoyl-pentapeptide-transferase from Francisella tularensis subsp. mediasiatica (strain FSC147).